The chain runs to 472 residues: Eukaryotic translation initiation factor 2 subunit 3 (472 aa).

Ala2 carries the N-acetylalanine; partial modification. Ser16 is subject to Phosphoserine. A tr-type G domain is found at 39-248 (QATINIGTIG…IVKKIPVPPR (210 aa)). Positions 48 to 55 (GHVAHGKS) are G1. 51 to 56 (AHGKST) contributes to the GTP binding site. The G2 stretch occupies residues 76 to 80 (NITIK). The segment at 134–137 (DCPG) is G3. GTP-binding positions include 190–193 (NKID) and 225–227 (SAQ). Residues 190-193 (NKID) form a G4 region. Residues 225–227 (SAQ) form a G5 region. Positions 457-469 (GQIRRGVTIKPTV) are interacts with CDC123.

The protein belongs to the TRAFAC class translation factor GTPase superfamily. Classic translation factor GTPase family. EIF2G subfamily. In terms of assembly, eukaryotic translation initiation factor 2 eIF2 is a heterotrimeric complex composed of an alpha (EIF2S1), a beta (EIF2S2) and a gamma (EIF2S3) chain. eIF2 is member of the 43S pre-initiation complex (43S PIC). Interacts (via C-terminus) with CDC123; the interaction is direct. In terms of tissue distribution, expressed in testis, brain, liver and muscle.

It localises to the cytoplasm. It is found in the cytosol. The catalysed reaction is GTP + H2O = GDP + phosphate + H(+). In terms of biological role, member of the eIF2 complex that functions in the early steps of protein synthesis by forming a ternary complex with GTP and initiator tRNA. This complex binds to a 40S ribosomal subunit, followed by mRNA binding to form the 43S pre-initiation complex (43S PIC). Junction of the 60S ribosomal subunit to form the 80S initiation complex is preceded by hydrolysis of the GTP bound to eIF2 and release of an eIF2-GDP binary complex. In order for eIF2 to recycle and catalyze another round of initiation, the GDP bound to eIF2 must exchange with GTP by way of a reaction catalyzed by eIF-2B. This chain is Eukaryotic translation initiation factor 2 subunit 3 (EIF2S3), found in Homo sapiens (Human).